We begin with the raw amino-acid sequence, 464 residues long: Growth hormone-releasing hormone receptor (464 aa).

An N-terminal signal peptide occupies residues 1–22 (MDSLLWATWVLCLLNLWGVALG). The Extracellular portion of the chain corresponds to 23-130 (HLHLECDFIT…EEKSYFSTVK (108 aa)). 3 disulfide bridges follow: Cys41/Cys64, Cys55/Cys96, and Cys78/Cys112. Residue Asn50 is glycosylated (N-linked (GlcNAc...) asparagine). Residues 131 to 151 (IIYTTGHSISIVALCVAIAIL) traverse the membrane as a helical segment. The Cytoplasmic segment spans residues 152 to 167 (VALRRLHCPRNYIHTQ). The helical transmembrane segment at 168 to 188 (LFATFILKASAVFLKDAAVFQ) threads the bilayer. The Extracellular portion of the chain corresponds to 189–210 (GDSTDHCSMSTILCKVSVAVSH). The helical transmembrane segment at 211–231 (FATMTNFSWLLAEAVYLSCLL) threads the bilayer. Residues 232 to 240 (ASTSPRSKP) are Cytoplasmic-facing. A helical transmembrane segment spans residues 241-261 (AFWWLVLAGWGLPVLCTGTWV). At 262–283 (GCKLAFEDTACWDLDDSSPYWW) the chain is on the extracellular side. The helical transmembrane segment at 284-304 (IIKGPIVLSVGVNFGLFLNII) threads the bilayer. The Cytoplasmic segment spans residues 305 to 372 (CILLRKLGPA…QLPWRLSKST (68 aa)). The helical transmembrane segment at 373-393 (LLLIPLFGIHYIIFNFLPDSA) threads the bilayer. At 394–398 (GLGIR) the chain is on the extracellular side. The helical transmembrane segment at 399 to 419 (LPLELGLGSFQGFVVAVLYCF) threads the bilayer. At 420–464 (LNQEVRTEISRKWYGHDPELLPARRTCTEWTTPPRSRVKVLTSEC) the chain is on the cytoplasmic side.

Belongs to the G-protein coupled receptor 2 family. Pituitary gland.

The protein resides in the cell membrane. Receptor for GRF, coupled to G proteins which activate adenylyl cyclase. Stimulates somatotroph cell growth, growth hormone gene transcription and growth hormone secretion. In Rattus norvegicus (Rat), this protein is Growth hormone-releasing hormone receptor (Ghrhr).